The following is a 218-amino-acid chain: Octanoyltransferase (218 aa).

A BPL/LPL catalytic domain is found at 31–206 (REAADEVWLV…QLVKHLDYAE (176 aa)). Substrate-binding positions include 70 to 77 (RGGQVTYH), 137 to 139 (SLG), and 150 to 152 (GLA). Catalysis depends on cysteine 168, which acts as the Acyl-thioester intermediate.

It belongs to the LipB family.

Its subcellular location is the cytoplasm. The catalysed reaction is octanoyl-[ACP] + L-lysyl-[protein] = N(6)-octanoyl-L-lysyl-[protein] + holo-[ACP] + H(+). Its pathway is protein modification; protein lipoylation via endogenous pathway; protein N(6)-(lipoyl)lysine from octanoyl-[acyl-carrier-protein]: step 1/2. Its function is as follows. Catalyzes the transfer of endogenously produced octanoic acid from octanoyl-acyl-carrier-protein onto the lipoyl domains of lipoate-dependent enzymes. Lipoyl-ACP can also act as a substrate although octanoyl-ACP is likely to be the physiological substrate. The sequence is that of Octanoyltransferase from Pseudomonas syringae pv. syringae (strain B728a).